Reading from the N-terminus, the 94-residue chain is ESAT-6-like protein EsxN (94 aa).

Belongs to the WXG100 family. ESAT-6 subfamily.

The protein resides in the secreted. This Mycobacterium bovis (strain ATCC BAA-935 / AF2122/97) protein is ESAT-6-like protein EsxN.